The primary structure comprises 87 residues: Beta-defensin 109C (87 aa).

Residues 1–22 (MRLHLLLLILLLFSILLSPVRG) form the signal peptide. Cystine bridges form between Cys31–Cys59, Cys38–Cys53, and Cys43–Cys60.

It belongs to the beta-defensin family.

The protein localises to the secreted. Functionally, has antibacterial activity. The protein is Beta-defensin 109C (DEFB109C) of Homo sapiens (Human).